Here is a 558-residue protein sequence, read N- to C-terminus: EF-hand and coiled-coil domain-containing protein 1 (558 aa).

The EF-hand domain maps to 43-78; it reads GLDQYLQEVFHHLDCRGAGRLPRADFRALCAVLGLN. Residues 161–170 show a composition bias toward basic residues; it reads LRRPRRRRRP. Disordered stretches follow at residues 161–183 and 304–395; these read LRRP…YGER and RSEG…QPSG. Coiled coils occupy residues 179–304 and 453–495; these read AYGE…RGYR and VEAE…LNIS.

The polypeptide is EF-hand and coiled-coil domain-containing protein 1 (Efcc1) (Mus musculus (Mouse)).